A 182-amino-acid polypeptide reads, in one-letter code: Large ribosomal subunit protein uL6 (182 aa).

The protein belongs to the universal ribosomal protein uL6 family. In terms of assembly, part of the 50S ribosomal subunit.

Functionally, this protein binds to the 23S rRNA, and is important in its secondary structure. It is located near the subunit interface in the base of the L7/L12 stalk, and near the tRNA binding site of the peptidyltransferase center. The sequence is that of Large ribosomal subunit protein uL6 from Dehalococcoides mccartyi (strain ATCC BAA-2100 / JCM 16839 / KCTC 5957 / BAV1).